Reading from the N-terminus, the 170-residue chain is Bacilliredoxin SRU_1493 (170 aa).

Positions 140-170 (CGDEEPPADAPSRPDPSSSGEGLPSTFQSIT) are disordered.

Belongs to the bacilliredoxin family.

The protein is Bacilliredoxin SRU_1493 of Salinibacter ruber (strain DSM 13855 / M31).